The following is a 51-amino-acid chain: Large ribosomal subunit protein eL39z (51 aa).

It belongs to the eukaryotic ribosomal protein eL39 family.

In Oryza sativa subsp. japonica (Rice), this protein is Large ribosomal subunit protein eL39z (RPL39A).